The primary structure comprises 289 residues: 4-hydroxy-tetrahydrodipicolinate synthase (289 aa).

Thr-43 is a binding site for pyruvate. Tyr-131 acts as the Proton donor/acceptor in catalysis. Lys-160 (schiff-base intermediate with substrate) is an active-site residue. A pyruvate-binding site is contributed by Val-200.

Belongs to the DapA family. Homotetramer; dimer of dimers.

It is found in the cytoplasm. It catalyses the reaction L-aspartate 4-semialdehyde + pyruvate = (2S,4S)-4-hydroxy-2,3,4,5-tetrahydrodipicolinate + H2O + H(+). It functions in the pathway amino-acid biosynthesis; L-lysine biosynthesis via DAP pathway; (S)-tetrahydrodipicolinate from L-aspartate: step 3/4. Functionally, catalyzes the condensation of (S)-aspartate-beta-semialdehyde [(S)-ASA] and pyruvate to 4-hydroxy-tetrahydrodipicolinate (HTPA). This Methanococcus maripaludis (strain C7 / ATCC BAA-1331) protein is 4-hydroxy-tetrahydrodipicolinate synthase.